A 503-amino-acid chain; its full sequence is Cell wall integrity and stress response component 2 (503 aa).

Residues 1–23 (MHLDLIHKSFILVWLIYIRAALA) form the signal peptide. At 24–325 (DQFTYKACYS…KGLSGGAIAG (302 aa)) the chain is on the extracellular side. Positions 25–118 (QFTYKACYSA…SSAMNVYINN (94 aa)) constitute a WSC domain. Residues 124–260 (DSTSSTATST…STPSSTSIGT (137 aa)) are disordered. The helical transmembrane segment at 326–346 (VVVGVVCGTVALLALALFFFV) threads the bilayer. Residues 347-503 (WKKRRQSSQH…AKDSNNSSLR (157 aa)) are Cytoplasmic-facing. T402 carries the phosphothreonine modification. Phosphoserine is present on residues S455 and S458. Residues 470–503 (IVNPDNVSSNIGSNVSDGDDDYDDAKDSNNSSLR) are disordered.

Post-translationally, N-glycosylated.

It is found in the cell membrane. The chain is Cell wall integrity and stress response component 2 (WSC2) from Saccharomyces cerevisiae (strain ATCC 204508 / S288c) (Baker's yeast).